Here is an 832-residue protein sequence, read N- to C-terminus: Histone acetyltransferase KAT2B (832 aa).

Gly residues predominate over residues 1 to 22; that stretch reads MSEAGGAGPGGCGAGAGAGAGP. Disordered stretches follow at residues 1–54 and 395–436; these read MSEA…ACGP and SYNS…DSHV. Over residues 24–39 the composition is skewed to pro residues; sequence ALPPQPAALPPAPPQG. Residues 40-54 are compositionally biased toward low complexity; sequence SPCAAAAGGSGACGP. Residues 395-413 show a composition bias toward polar residues; that stretch reads SYNSTSSSLEQPNAGSSSP. Positions 425-436 are enriched in basic and acidic residues; the sequence is PGEKRKMTDSHV. The region spanning 503 to 651 is the N-acetyltransferase domain; the sequence is LNQKPNKKIL…GATLMGCELN (149 aa). Glutamate 570 acts as the Proton donor/acceptor in catalysis. Acetyl-CoA is bound by residues 574 to 576, 581 to 587, and 612 to 615; these read CAV, QVKGYGT, and YAIG. Positions 706–725 are disordered; that stretch reads IRETGWKPSGKEKSKEPRDP. The segment covering 714–725 has biased composition (basic and acidic residues); that stretch reads SGKEKSKEPRDP. One can recognise a Bromo domain in the interval 723-827; sequence RDPDQLYSTL…KFFFSKIKEA (105 aa).

This sequence belongs to the acetyltransferase family. GCN5 subfamily. In terms of assembly, interacts with SIRT1. Interacts (unsumoylated form) with NR2C1; the interaction promotes transactivation activity. Interacts with EP300, CREBBP and DDX17. Interacts with NCOA1 and NCOA3. Component of a large chromatin remodeling complex, at least composed of MYSM1, KAT2B/PCAF, RBM10 and KIF11/TRIP5. Interacts with NR2C2 (hypophosphorylated and unsumoylated form); the interaction promotes the transactivation activity of NR2C2. Interacts with KLF1; the interaction does not acetylate KLF1 and there is no enhancement of its transactivational activity. Interacts with NFE4. Interacts with MECOM. Interacts with E2F1; the interaction acetylates E2F1 augmenting its DNA-binding and transcriptional activity. Interacts with NPAS2, BMAL1 and CLOCK. Interacts with BCAS3. Interacts with CEBPB. Interacts with NR4A3. Interacts with NFATC2. Interacts with TBX5. Interacts with PLK4. Interacts with RB1; this interaction leads to RB1 acetylation. Interacts with VRK1. As to quaternary structure, (Microbial infection) Interacts with and acetylates HIV-1 Tat. (Microbial infection) Interacts with HTLV-1 Tax. As to expression, ubiquitously expressed but most abundant in heart and skeletal muscle. Also expressed in the skin, in keratinocytes (at protein level).

Its subcellular location is the nucleus. The protein localises to the cytoplasm. The protein resides in the cytoskeleton. It localises to the microtubule organizing center. It is found in the centrosome. The catalysed reaction is L-lysyl-[histone] + acetyl-CoA = N(6)-acetyl-L-lysyl-[histone] + CoA + H(+). The enzyme catalyses L-lysyl-[protein] + acetyl-CoA = N(6)-acetyl-L-lysyl-[protein] + CoA + H(+). It carries out the reaction spermidine + acetyl-CoA = N(8)-acetylspermidine + CoA + H(+). Its activity is regulated as follows. Activated in vitro by very low concentrations of spermidine, but inhibited at spermidine concentrations higher than 4 uM. The activating effect of low spermidine concentrations may be mediated by N(8)-acetylspermidine produced by KAT2B/P/CAF itself acting as a positive feedback loop. In terms of biological role, functions as a histone acetyltransferase (HAT) to promote transcriptional activation. Has significant histone acetyltransferase activity with core histones (H3 and H4), and also with nucleosome core particles. Has a a strong preference for acetylation of H3 at 'Lys-9' (H3K9ac). Also acetylates non-histone proteins, such as ACLY, MAPRE1/EB1, PLK4, RRP9/U3-55K and TBX5. Inhibits cell-cycle progression and counteracts the mitogenic activity of the adenoviral oncoprotein E1A. Acts as a circadian transcriptional coactivator which enhances the activity of the circadian transcriptional activators: NPAS2-BMAL1 and CLOCK-BMAL1 heterodimers. Involved in heart and limb development by mediating acetylation of TBX5, acetylation regulating nucleocytoplasmic shuttling of TBX5. Acts as a negative regulator of centrosome amplification by mediating acetylation of PLK4. Acetylates RRP9/U3-55K, a core subunit of the U3 snoRNP complex, impairing pre-rRNA processing. Acetylates MAPRE1/EB1, promoting dynamic kinetochore-microtubule interactions in early mitosis. Also acetylates spermidine. (Microbial infection) In case of HIV-1 infection, it is recruited by the viral protein Tat. Regulates Tat's transactivating activity and may help inducing chromatin remodeling of proviral genes. The sequence is that of Histone acetyltransferase KAT2B from Homo sapiens (Human).